The sequence spans 392 residues: MGSIDAAVLGSEKKSNPGKATILALGKAFPHQLVMQEYLVDGYFKTTKCDDPELKQKLTRLCKTTTVKTRYVVMSEEILKKYPELAIEGGSTVTQRLDICNDAVTEMAVEASRACIKNWGRSISDITHVVYVSSSEARLPGGDLYLAKGLGLSPDTHRVLLYFVGCSGGVAGLRVAKDIAENNPGSRVLLATSETTIIGFKPPSVDRPYDLVGVALFGDGAGAMIIGSDPDPICEKPLFELHTAIQNFLPETEKTIDGRLTEQGINFKLSRELPQIIEDNVENFCKKLIGKAGLAHKNYNQMFWAVHPGGPAILNRIEKRLNLSPEKLSPSRRALMDYGNASSNSIVYVLEYMLEESKKVRNMNEEENEWGLILAFGPGVTFEGIIARNLDV.

CoA is bound at residue 57–64 (KLTRLCKT). Cys166 acts as the Nucleophile in catalysis. A substrate-binding site is contributed by 218–219 (GD). CoA is bound by residues Leu269, 309 to 312 (GGPA), and Ala312.

It belongs to the thiolase-like superfamily. Chalcone/stilbene synthases family. Homodimer. Interacts with 4CLL1/ACOS5 and TKPR1. Expressed in flowers and flower buds (at protein level). Mostly confined to anther tapetal cells.

The protein resides in the endoplasmic reticulum. Its pathway is secondary metabolite biosynthesis; flavonoid biosynthesis. Its function is as follows. Plant type III polyketide synthases (PKSs) that catalyzes the condensation of malonyl-CoA units with various CoA ester starter molecules to generate a diverse array of natural products including long-chain alkyl alpha-pyrones. Accepts up to C(20) chain-length fatty acyl CoAs as starter substrates, and carries out sequential condensations with malonyl-CoA to produce triketide and tetraketide alpha-pyrones, potential sporopollenin precursors. Favorite substrates for are midchain- and v-hydroxylated fatty acyl-CoAs (e.g. 12-hydroxyoctadecanoyl-CoA and 16-hydroxyhexadecanoyl-CoA). Required for pollen development and sporopollenin biosynthesis, the major constituent of exine in the outer pollen wall. In vitro, can use 4-coumaroyl-coenzyme A as substrate to produce bis-noryangonin and fatty acyl-coenzyme A as substrate to produce medium-chain alkyl pyrones. May play a role in both the synthesis of pollen fatty acids and phenolics found in exine. This chain is Type III polyketide synthase B, found in Arabidopsis thaliana (Mouse-ear cress).